Here is a 409-residue protein sequence, read N- to C-terminus: Pectin acetylesterase 4 (409 aa).

A signal peptide spans 1 to 32; it reads MVIRSLLQCRTWSKSDWLLASIGIVLIVYSFS. N-linked (GlcNAc...) asparagine glycosylation is found at Asn36 and Asn163. Active-site charge relay system residues include Ser199, Asp295, and His362. Residues Asn379 and Asn406 are each glycosylated (N-linked (GlcNAc...) asparagine).

The protein belongs to the pectinacetylesterase family.

The protein resides in the secreted. Its subcellular location is the cell wall. Functionally, hydrolyzes acetyl esters in homogalacturonan regions of pectin. In type I primary cell wall, galacturonic acid residues of pectin can be acetylated at the O-2 and O-3 positions. Decreasing the degree of acetylation of pectin gels in vitro alters their physical properties. The chain is Pectin acetylesterase 4 from Arabidopsis thaliana (Mouse-ear cress).